A 1164-amino-acid polypeptide reads, in one-letter code: Auxin response factor 7 (1164 aa).

The segment at residues F127–N229 is a DNA-binding region (TF-B3). Disordered regions lie at residues H451–L505, Q536–Q555, H570–Q728, F765–G858, and K903–N930. The span at L464–M489 shows a compositional bias: polar residues. The span at H570–Q635 shows a compositional bias: low complexity. The span at Q637–P651 shows a compositional bias: polar residues. Over residues S652 to Q671 the composition is skewed to low complexity. Residues A678–E710 are compositionally biased toward polar residues. Low complexity-rich tracts occupy residues Q711–Q728 and F765–Q790. Residues G791 to P808 are compositionally biased toward polar residues. Over residues P841 to N851 the composition is skewed to low complexity. Residues K903 to S921 show a composition bias toward polar residues. Positions R1037–N1130 constitute a PB1 domain. Residues D1145–R1164 form a disordered region.

Belongs to the ARF family. Homodimers and heterodimers. Interacts with the auxin-responsive proteins IAA1 and IAA12 (BODENLOS). Interacts (via PB1 domain) with IAA17 (via PB1 domain). Interacts with IAA19. Interacts with ARF5. Binds to JMJ30. Binds to ATXR2 in the nucleus. In terms of tissue distribution, expressed in the whole plant.

It is found in the nucleus. Functionally, auxin response factors (ARFs) are transcriptional factors that bind specifically to the DNA sequence 5'-TGTCTC-3' found in the auxin-responsive promoter elements (AuxREs). Acts as a transcriptional activator of several tropic stimulus-induced (TSI) genes, including SAUR50. Formation of heterodimers with Aux/IAA proteins may alter their ability to modulate early auxin response genes expression. Required for differential growth responses of aerial tissues. Involved in ethylene responses. Regulates lateral root formation through direct regulation of LBD16 and/or LBD29. Functionally redundant with ARF19. Mediates embryo axis formation and vascular tissues differentiation. Functionally redundant with ARF5. Involved in cellular dedifferentiation during callus formation on callus-inducing medium (CIM) and in an ATXR2-dependent manner. The sequence is that of Auxin response factor 7 from Arabidopsis thaliana (Mouse-ear cress).